Here is a 298-residue protein sequence, read N- to C-terminus: UDP-3-O-acyl-N-acetylglucosamine deacetylase (298 aa).

Zn(2+) is bound by residues histidine 79, histidine 239, and aspartate 243. The active-site Proton donor is the histidine 266.

The protein belongs to the LpxC family. Zn(2+) is required as a cofactor.

It catalyses the reaction a UDP-3-O-[(3R)-3-hydroxyacyl]-N-acetyl-alpha-D-glucosamine + H2O = a UDP-3-O-[(3R)-3-hydroxyacyl]-alpha-D-glucosamine + acetate. Its pathway is glycolipid biosynthesis; lipid IV(A) biosynthesis; lipid IV(A) from (3R)-3-hydroxytetradecanoyl-[acyl-carrier-protein] and UDP-N-acetyl-alpha-D-glucosamine: step 2/6. In terms of biological role, catalyzes the hydrolysis of UDP-3-O-myristoyl-N-acetylglucosamine to form UDP-3-O-myristoylglucosamine and acetate, the committed step in lipid A biosynthesis. The polypeptide is UDP-3-O-acyl-N-acetylglucosamine deacetylase (Wigglesworthia glossinidia brevipalpis).